A 127-amino-acid chain; its full sequence is Anti-adapter protein IraD (127 aa).

It belongs to the GpW/Gp25 family. IraD subfamily. In terms of assembly, interacts with RssB.

It is found in the cytoplasm. Inhibits RpoS proteolysis by regulating RssB activity, thereby increasing the stability of the sigma stress factor RpoS during oxidative stress. Its effect on RpoS stability is due to its interaction with RssB, which probably blocks the interaction of RssB with RpoS, and the consequent delivery of the RssB-RpoS complex to the ClpXP protein degradation pathway. The protein is Anti-adapter protein IraD of Escherichia coli O127:H6 (strain E2348/69 / EPEC).